The sequence spans 206 residues: VEL1-related protein YOR387C (206 aa).

The N-terminal stretch at 1-19 is a signal peptide; it reads MSFLNIFTFFSVLVSVATA. N26, N48, N91, N139, N152, and N183 each carry an N-linked (GlcNAc...) asparagine glycan.

It belongs to the VEL1 family. Post-translationally, N-glycosylated.

The protein resides in the cytoplasm. It is found in the cytosol. The protein is VEL1-related protein YOR387C of Saccharomyces cerevisiae (strain ATCC 204508 / S288c) (Baker's yeast).